A 239-amino-acid chain; its full sequence is Probable transcriptional regulatory protein RBAM_007230 (239 aa).

The protein belongs to the TACO1 family. YeeN subfamily.

It is found in the cytoplasm. The polypeptide is Probable transcriptional regulatory protein RBAM_007230 (Bacillus velezensis (strain DSM 23117 / BGSC 10A6 / LMG 26770 / FZB42) (Bacillus amyloliquefaciens subsp. plantarum)).